A 75-amino-acid polypeptide reads, in one-letter code: UPF0270 protein PputGB1_1339 (75 aa).

The protein belongs to the UPF0270 family.

In Pseudomonas putida (strain GB-1), this protein is UPF0270 protein PputGB1_1339.